Consider the following 52-residue polypeptide: Rubredoxin (52 aa).

The Rubredoxin-like domain maps to 1 to 52 (MEKWQCTVCGYIYDPEVGDPTQNIPPGTKFEDLPDDWVCPDCGVGKDQFEKI). Fe cation-binding residues include cysteine 6, cysteine 9, cysteine 39, and cysteine 42.

The protein belongs to the rubredoxin family. The cofactor is Fe(3+).

Functionally, rubredoxin is a small nonheme, iron protein lacking acid-labile sulfide. Its single Fe, chelated to 4 Cys, functions as an electron acceptor and may also stabilize the conformation of the molecule. This chain is Rubredoxin, found in Thermoanaerobacterium thermosaccharolyticum (strain ATCC 7956 / DSM 571 / NCIMB 9385 / NCA 3814 / NCTC 13789 / WDCM 00135 / 2032) (Clostridium thermosaccharolyticum).